Consider the following 66-residue polypeptide: U1-theraphotoxin-Cg1d 1 (66 aa).

The first 21 residues, 1 to 21 (MKMSALFVIFGLALLFCNSFA), serve as a signal peptide directing secretion. Positions 22–29 (AELKATGR) are excised as a propeptide. 3 disulfide bridges follow: Cys31–Cys46, Cys38–Cys51, and Cys45–Cys58. A Proline amide modification is found at Pro63.

Belongs to the neurotoxin 10 (Hwtx-1) family. 46 (Jztx-7/10/12) subfamily. Expressed by the venom gland.

The protein localises to the secreted. Functionally, probable ion channel inhibitor. The sequence is that of U1-theraphotoxin-Cg1d 1 from Chilobrachys guangxiensis (Chinese earth tiger tarantula).